Here is a 157-residue protein sequence, read N- to C-terminus: SsrA-binding protein (157 aa).

The tract at residues 134 to 157 (HDKRESEKKRDWGREKGRLLRARG) is disordered. The segment covering 135–151 (DKRESEKKRDWGREKGR) has biased composition (basic and acidic residues).

The protein belongs to the SmpB family.

It localises to the cytoplasm. Its function is as follows. Required for rescue of stalled ribosomes mediated by trans-translation. Binds to transfer-messenger RNA (tmRNA), required for stable association of tmRNA with ribosomes. tmRNA and SmpB together mimic tRNA shape, replacing the anticodon stem-loop with SmpB. tmRNA is encoded by the ssrA gene; the 2 termini fold to resemble tRNA(Ala) and it encodes a 'tag peptide', a short internal open reading frame. During trans-translation Ala-aminoacylated tmRNA acts like a tRNA, entering the A-site of stalled ribosomes, displacing the stalled mRNA. The ribosome then switches to translate the ORF on the tmRNA; the nascent peptide is terminated with the 'tag peptide' encoded by the tmRNA and targeted for degradation. The ribosome is freed to recommence translation, which seems to be the essential function of trans-translation. The protein is SsrA-binding protein of Nitrobacter hamburgensis (strain DSM 10229 / NCIMB 13809 / X14).